Here is a 378-residue protein sequence, read N- to C-terminus: MKLKEVTEGKVRIFVPDPKEYMIEGKFDPSWAPVFYNPKMTFNRDLSVIVVSLLKPKIILDALSATGIRGIRYYVESWKSEQLILNDKNSTAASLIQINVKNNGIENAKIYNKDANALLYEIKSEYIDIDPFGSPVPFILSSVNATIRNGIVAFTATDLSPLEGSSRTSCRRKYDAINYKLSSSKELGLRILIGKIIREAATLEKTVHPLFSFYADYYYRLFAIVESGARKADENINKNLKYFGECPRCGFQTFVDENCKTKCPICGENFIIIGPLYIGPLHNMEFLKRMIDTYSDFNYLSSFNRIQKLLNVIEKEAKYKSVFYNISKLASKLKVSAIPPIDSILECLGDASKTHFAPTGIRTDKGYEEIIRCVKSLR.

In terms of domain architecture, Trm1 methyltransferase spans 4-374 (KEVTEGKVRI…KGYEEIIRCV (371 aa)). Residues arginine 44, arginine 69, aspartate 87, aspartate 114, and alanine 115 each coordinate S-adenosyl-L-methionine. Positions 246, 249, 263, and 266 each coordinate Zn(2+).

The protein belongs to the class I-like SAM-binding methyltransferase superfamily. Trm1 family.

The enzyme catalyses guanosine(26) in tRNA + 2 S-adenosyl-L-methionine = N(2)-dimethylguanosine(26) in tRNA + 2 S-adenosyl-L-homocysteine + 2 H(+). Its function is as follows. Dimethylates a single guanine residue at position 26 of a number of tRNAs using S-adenosyl-L-methionine as donor of the methyl groups. This is tRNA (guanine(26)-N(2))-dimethyltransferase from Saccharolobus islandicus (strain Y.G.57.14 / Yellowstone #1) (Sulfolobus islandicus).